We begin with the raw amino-acid sequence, 184 residues long: Large ribosomal subunit protein uL22 (184 aa).

The disordered stretch occupies residues 160–184; the sequence is PEEEVAQKKKISQKKLKKQKLMARE. Residues 167 to 184 are compositionally biased toward basic residues; the sequence is KKKISQKKLKKQKLMARE.

The protein belongs to the universal ribosomal protein uL22 family. Component of the large ribosomal subunit. Expressed in pancreas, lung, colon, cystic duct, gall bladder, kidney and liver. Expressed at high levels in the well differentiated pancreatic tumor cell lines HPAF, COLO 357 and Capan-1, the moderately differentiated pancreatic tumor cell lines T3M-4, AsPc-1 and BxPc-3, the poorly differentiated pancreatic tumor cell line MIA PaCa-2, and the pancreatic tumor cell lines of undefined differentiation status such as SW979. Expressed at lower levels in the poorly differentiated pancreatic tumor cell lines HCG-25 and PANC-1.

The protein resides in the cytoplasm. Its function is as follows. Component of the large ribosomal subunit. The ribosome is a large ribonucleoprotein complex responsible for the synthesis of proteins in the cell. The polypeptide is Large ribosomal subunit protein uL22 (RPL17) (Homo sapiens (Human)).